A 633-amino-acid chain; its full sequence is MTTPKKTAKISGNEARELSDLSEDIGIRFKYQNSERVYLQGSRDDIRVPLREIRQDDTYTAQGTEANPPIPVYDTSGAYGDPAAHIDLKQGLPHIRTAWLDERGDTEILPKLSSEYGIERAHDPKTAHLRFNQITRPRRAKAGRNVTQLHYARQGIITPEMEFAAIRERMKLDELFRRPEYAKLLKQHTGQSFGANIPTRPDQITPEFVRQEIAAGRAIIPANINHPELEPMIIGRNFRVKINGNLGNSAVTSSLTEEVEKMVWSLRWGADTIMDLSTGAHIHETREWIIRNAPVPIGTVPIYQTLEKTGGIAEDLTWDLFRDTLIEQAEQGVDYFTIHAGVLLRYVPMTANRLTGIVSRGGSIMAKWCLAHHRENFLYTHFDEICEIMKAYDVSFSLGDGLRPGCIADANDESQFAELHTLGELTDKAWKHDVQVMIEGPGHVPLQRVKENMTEELQHCFEAPFYTLGPLVTDIAPGYDHITSGIGAANIGWYGTAMLCYVTPKEHLGLPDKEDVRTGIITYKLAAHAADLAKGWPGAQLRDNALSKARFEFRWRDQFRLSLDPERAESFHDETLPAEGAKIAHFCSMCGPKFCSMKITQEVRDYADKQKAQRQGMEEKAVEFVKKGAKIYS.

Substrate is bound by residues N245, M274, Y303, H339, 359–361, 400–403, and E439; these read SRG and DGLR. H443 provides a ligand contact to Zn(2+). Y466 lines the substrate pocket. H507 lines the Zn(2+) pocket. [4Fe-4S] cluster contacts are provided by C587, C590, and C595.

It belongs to the ThiC family. In terms of assembly, homodimer. [4Fe-4S] cluster serves as cofactor.

The enzyme catalyses 5-amino-1-(5-phospho-beta-D-ribosyl)imidazole + S-adenosyl-L-methionine = 4-amino-2-methyl-5-(phosphooxymethyl)pyrimidine + CO + 5'-deoxyadenosine + formate + L-methionine + 3 H(+). Its pathway is cofactor biosynthesis; thiamine diphosphate biosynthesis. Its function is as follows. Catalyzes the synthesis of the hydroxymethylpyrimidine phosphate (HMP-P) moiety of thiamine from aminoimidazole ribotide (AIR) in a radical S-adenosyl-L-methionine (SAM)-dependent reaction. The polypeptide is Phosphomethylpyrimidine synthase (Neisseria gonorrhoeae (strain ATCC 700825 / FA 1090)).